Here is a 255-residue protein sequence, read N- to C-terminus: ATP synthase subunit a 2 (255 aa).

Helical transmembrane passes span 26 to 46, 86 to 106, 131 to 151, 205 to 225, and 230 to 250; these read SINI…IGVF, LIGP…SIDL, DVNV…GYTL, MIFI…SVPW, and ILIV…YLAM.

Belongs to the ATPase A chain family. F-type ATPases have 2 components, CF(1) - the catalytic core - and CF(0) - the membrane proton channel. CF(1) has five subunits: alpha(3), beta(3), gamma(1), delta(1), epsilon(1). CF(0) has three main subunits: a(1), b(2) and c(9-12). The alpha and beta chains form an alternating ring which encloses part of the gamma chain. CF(1) is attached to CF(0) by a central stalk formed by the gamma and epsilon chains, while a peripheral stalk is formed by the delta and b chains.

It localises to the cell inner membrane. Key component of the proton channel; it plays a direct role in the translocation of protons across the membrane. The protein is ATP synthase subunit a 2 of Photobacterium profundum (strain SS9).